A 298-amino-acid polypeptide reads, in one-letter code: Exosome complex component Rrp4 (298 aa).

Residues 63 to 131 enclose the S1 motif domain; that stretch reads GDVVIGKIKD…EVKKVKLGLK (69 aa). Positions 139 to 197 constitute a KH domain; that stretch reads RGGIIVDITPTKVPRLIGKKGSMINMIKDKTNCKIIVGQNGLVWVKGEEDMEQLTKDII. The tract at residues 276-298 is disordered; the sequence is KNKKDKPLSYGNNSGNSYILNNR. Residues 285–298 show a composition bias toward polar residues; it reads YGNNSGNSYILNNR.

It belongs to the RRP4 family. As to quaternary structure, component of the archaeal exosome complex. Forms a trimer of Rrp4 and/or Csl4 subunits. The trimer associates with a hexameric ring-like arrangement composed of 3 Rrp41-Rrp42 heterodimers.

It localises to the cytoplasm. Its function is as follows. Non-catalytic component of the exosome, which is a complex involved in RNA degradation. Increases the RNA binding and the efficiency of RNA degradation. Confers strong poly(A) specificity to the exosome. The protein is Exosome complex component Rrp4 of Methanobrevibacter smithii (strain ATCC 35061 / DSM 861 / OCM 144 / PS).